Here is a 353-residue protein sequence, read N- to C-terminus: MTAILERRETTSLWGRFCNWITSTENRLYIGWFGVLMIPTLLTATSVFIIAFIAAPPVDIDGIREPVSGSLLYGNNIISGAIIPTSAAIGLHFYPIWEAASVDEWLYNGGPYELIVLHFLLGVACYMGREWELSFRLGMRPWIAVAYSAPVAAATAVFLIYPIGQGSFSDGMPLGISGTFNFMIVFQAEHNILMHPFHMLGVAGVFGGSLFSAMHGSLVTSSLIRETTENESANAGYRFGQEEETYNIVAAHGYFGRLIFQYASFNNSRSLHFFLAAWPVVGIWFTALGISTMAFNLNGFNFNQSVVDSQGRVINTWADIINRANLGMEVMHERNAHNFPLDLAAVEAPSING.

The residue at position 2 (Thr-2) is an N-acetylthreonine. Thr-2 bears the Phosphothreonine mark. Helical transmembrane passes span 29 to 46 (YIGWFGVLMIPTLLTATS), 118 to 133 (HFLLGVACYMGREWEL), and 142 to 156 (WIAVAYSAPVAAATA). His-118 lines the chlorophyll a pocket. Tyr-126 is a binding site for pheophytin a. Residues Asp-170 and Glu-189 each coordinate [CaMn4O5] cluster. A helical transmembrane segment spans residues 197 to 218 (FHMLGVAGVFGGSLFSAMHGSL). Position 198 (His-198) interacts with chlorophyll a. A quinone-binding positions include His-215 and 264-265 (SF). His-215 provides a ligand contact to Fe cation. His-272 provides a ligand contact to Fe cation. A helical transmembrane segment spans residues 274–288 (FLAAWPVVGIWFTAL). Residues His-332, Glu-333, Asp-342, and Ala-344 each coordinate [CaMn4O5] cluster. Residues 345–353 (AVEAPSING) constitute a propeptide that is removed on maturation.

It belongs to the reaction center PufL/M/PsbA/D family. In terms of assembly, PSII is composed of 1 copy each of membrane proteins PsbA, PsbB, PsbC, PsbD, PsbE, PsbF, PsbH, PsbI, PsbJ, PsbK, PsbL, PsbM, PsbT, PsbX, PsbY, PsbZ, Psb30/Ycf12, at least 3 peripheral proteins of the oxygen-evolving complex and a large number of cofactors. It forms dimeric complexes. The cofactor is The D1/D2 heterodimer binds P680, chlorophylls that are the primary electron donor of PSII, and subsequent electron acceptors. It shares a non-heme iron and each subunit binds pheophytin, quinone, additional chlorophylls, carotenoids and lipids. D1 provides most of the ligands for the Mn4-Ca-O5 cluster of the oxygen-evolving complex (OEC). There is also a Cl(-1) ion associated with D1 and D2, which is required for oxygen evolution. The PSII complex binds additional chlorophylls, carotenoids and specific lipids.. In terms of processing, tyr-161 forms a radical intermediate that is referred to as redox-active TyrZ, YZ or Y-Z. Post-translationally, C-terminally processed by CTPA; processing is essential to allow assembly of the oxygen-evolving complex and thus photosynthetic growth.

It localises to the plastid. Its subcellular location is the chloroplast thylakoid membrane. The enzyme catalyses 2 a plastoquinone + 4 hnu + 2 H2O = 2 a plastoquinol + O2. Its function is as follows. Photosystem II (PSII) is a light-driven water:plastoquinone oxidoreductase that uses light energy to abstract electrons from H(2)O, generating O(2) and a proton gradient subsequently used for ATP formation. It consists of a core antenna complex that captures photons, and an electron transfer chain that converts photonic excitation into a charge separation. The D1/D2 (PsbA/PsbD) reaction center heterodimer binds P680, the primary electron donor of PSII as well as several subsequent electron acceptors. In Chloranthus spicatus (Chulantree), this protein is Photosystem II protein D1.